The chain runs to 707 residues: Zinc finger CCHC domain-containing protein 8 (707 aa).

An N-acetylalanine modification is found at A2. The interval F16–V44 is disordered. The span at D34–G43 shows a compositional bias: acidic residues. The stretch at G45 to P80 forms a coiled coil. The CCHC-type zinc finger occupies P227–M244. RBM7 binding regions lie at residues F286–L299 and F309–K324. T342 carries the post-translational modification Phosphothreonine. 3 disordered regions span residues A409–E518, L531–C607, and Q641–I660. K413 is covalently cross-linked (Glycyl lysine isopeptide (Lys-Gly) (interchain with G-Cter in SUMO2)). A compositionally biased stretch (low complexity) spans S456–Q465. Over residues P466 to T496 the composition is skewed to pro residues. Phosphothreonine occurs at positions 472, 479, and 485. T492 is modified (phosphothreonine; by GSK3). The stretch at T516–S539 forms a coiled coil. The segment covering L549 to C559 has biased composition (polar residues). Residue T577 is modified to Phosphothreonine. S598 is modified (phosphoserine). A compositionally biased stretch (polar residues) spans S598–C607. T648 carries the post-translational modification Phosphothreonine. S649, S658, and S695 each carry phosphoserine. Positions P659 to E707 are MTREX binding.

Belongs to the ZCCHC8 family. Component of a nuclear TRAMP-like complex, an ATP-dependent exosome regulatory complex consisting of a helicase (MTREX), an oligadenylate polymerase (TENT4B or TENT4A), and a substrate specific RNA-binding factor (ZCCHC7 or ZCCHC8). Several TRAMP-like complexes exist with specific compositions and are associated with nuclear, or nucleolar RNA exosomes. Identified in the spliceosome C complex. Component of the nuclear exosome targeting (NEXT) complex composed of MTREX, ZCCHC8, and RBM7 that directs a subset of non-coding short-lived RNAs for exosomal degradation. Interacts with proteins involved in RNA processing and degradation such as MTREX and RBM7; interaction with MTREX enhances MTREX RNA helicase activity and bridges between RBM7 and MTREX. Interacts with TERC, the telomerase RNA component. In terms of processing, phosphorylation at Thr-492 by GSK3 is triggered in cells entering mitosis; this phosphorylation is greatly enhanced by nocodazole treatment, but reduced by lithium.

Its subcellular location is the nucleus. It localises to the nucleoplasm. Scaffolding subunit of the trimeric nuclear exosome targeting (NEXT) complex that is involved in the surveillance and turnover of aberrant transcripts and non-coding RNAs. NEXT functions as an RNA exosome cofactor that directs a subset of non-coding short-lived RNAs for exosomal degradation. May be involved in pre-mRNA splicing. It is required for 3'-end maturation of telomerase RNA component (TERC), TERC 3'-end targeting to the nuclear RNA exosome, and for telomerase function. The sequence is that of Zinc finger CCHC domain-containing protein 8 (ZCCHC8) from Homo sapiens (Human).